The following is a 406-amino-acid chain: Tryptophan synthase beta chain (406 aa).

Lys-95 carries the post-translational modification N6-(pyridoxal phosphate)lysine.

This sequence belongs to the TrpB family. In terms of assembly, tetramer of two alpha and two beta chains. Pyridoxal 5'-phosphate serves as cofactor.

It catalyses the reaction (1S,2R)-1-C-(indol-3-yl)glycerol 3-phosphate + L-serine = D-glyceraldehyde 3-phosphate + L-tryptophan + H2O. The protein operates within amino-acid biosynthesis; L-tryptophan biosynthesis; L-tryptophan from chorismate: step 5/5. Functionally, the beta subunit is responsible for the synthesis of L-tryptophan from indole and L-serine. The polypeptide is Tryptophan synthase beta chain (Pseudomonas fluorescens (strain ATCC BAA-477 / NRRL B-23932 / Pf-5)).